A 227-amino-acid polypeptide reads, in one-letter code: Small ribosomal subunit protein uS3 (227 aa).

A KH type-2 domain is found at 39 to 107 (VRQLLQKRLK…PVHITIEEVR (69 aa)).

It belongs to the universal ribosomal protein uS3 family. In terms of assembly, part of the 30S ribosomal subunit. Forms a tight complex with proteins S10 and S14.

Its function is as follows. Binds the lower part of the 30S subunit head. Binds mRNA in the 70S ribosome, positioning it for translation. The protein is Small ribosomal subunit protein uS3 (rpsC) of Coxiella burnetii (strain RSA 493 / Nine Mile phase I).